The sequence spans 285 residues: Nucleotide-binding protein Avin_12760 (285 aa).

An ATP-binding site is contributed by 8-15; the sequence is GRSGSGKS. 60–63 contributes to the GTP binding site; it reads DARN.

Belongs to the RapZ-like family.

Functionally, displays ATPase and GTPase activities. The polypeptide is Nucleotide-binding protein Avin_12760 (Azotobacter vinelandii (strain DJ / ATCC BAA-1303)).